The chain runs to 831 residues: MutS protein homolog 5 (831 aa).

The segment at 1–43 is disordered; that stretch reads MAFRATPGRTPPGPGPGVPSASFSSPQPAMAAPGGIEEEDEEE. 589-596 contributes to the ATP binding site; it reads GPNSSGKS.

It belongs to the DNA mismatch repair MutS family. In terms of assembly, heterooligomer of MSH4 and MSH5. Interacts with HJURP. Interacts with C7h12orf40/REDIC1.

Functionally, involved in DNA mismatch repair and meiotic recombination processes. Facilitates crossovers between homologs during meiosis. The sequence is that of MutS protein homolog 5 (Msh5) from Rattus norvegicus (Rat).